The following is a 351-amino-acid chain: tRNA pseudouridine synthase D (351 aa).

Asp-81 serves as the catalytic Nucleophile. The TRUD domain maps to 158–304; sequence GVPNYFGSQR…MRHERRAIEL (147 aa).

Belongs to the pseudouridine synthase TruD family.

The catalysed reaction is uridine(13) in tRNA = pseudouridine(13) in tRNA. Responsible for synthesis of pseudouridine from uracil-13 in transfer RNAs. This is tRNA pseudouridine synthase D from Aliivibrio fischeri (strain MJ11) (Vibrio fischeri).